Reading from the N-terminus, the 547-residue chain is Inositol 1,4,5-trisphosphate receptor-interacting protein-like 1 (547 aa).

The first 16 residues, 1–16, serve as a signal peptide directing secretion; it reads MAVISLLFLAVMYVVH. Topologically, residues 17 to 96 are extracellular; that stretch reads HPLMVSDRMD…PFQASGQDGG (80 aa). A coiled-coil region spans residues 28–66; the sequence is DTLARSRQLEKRMSEEMRQLEIEFEERSRAAEEKQKAEN. A helical transmembrane segment spans residues 97-117; the sequence is PLGWMLGNLWNAGLFCLFLIF. The Cytoplasmic portion of the chain corresponds to 118–547; sequence ELLRQNMQHE…LPCSPLAGGL (430 aa).

Belongs to the ITPRIP family.

It is found in the cell membrane. Functionally, functions as a ligand of CD3E, inhibiting TCR-CD3 complex signaling to regulate T cell activation. Induces stable CD3E-NCK1 binding, thereby preventing the CD3E-ZAP70 interaction and subsequently inhibiting the activation of the downstream ERK-NFkB signaling cascade and calcium influx. This Rattus norvegicus (Rat) protein is Inositol 1,4,5-trisphosphate receptor-interacting protein-like 1 (Itpripl1).